A 263-amino-acid polypeptide reads, in one-letter code: Bidirectional sugar transporter SWEET3 (263 aa).

At 1 to 7 the chain is on the extracellular side; sequence MGDKLRL. A helical transmembrane segment spans residues 8-28; that stretch reads SIGILGNGASLLLYTAPIVTF. Residues 9 to 97 enclose the MtN3/slv 1 domain; it reads IGILGNGASL…FIYFYYASPK (89 aa). Residues 29–42 are Cytoplasmic-facing; the sequence is SRVFKKKSTEEFSC. A helical membrane pass occupies residues 43 to 63; it reads FPYVMTLFNCLIYTWYGLPIV. Over 64 to 71 the chain is Extracellular; sequence SHLWENLP. Residues 72 to 92 traverse the membrane as a helical segment; sequence LVTINGVGILLESIFIFIYFY. Over 93 to 103 the chain is Cytoplasmic; the sequence is YASPKEKIKVG. The chain crosses the membrane as a helical span at residues 104–124; sequence VTFVPVIVGFGLTTAISALVF. Residues 125–132 are Extracellular-facing; the sequence is DDHRHRKS. Residues 133 to 153 traverse the membrane as a helical segment; that stretch reads FVGSVGLVASISMYGSPLVVM. In terms of domain architecture, MtN3/slv 2 spans 133–217; sequence FVGSVGLVAS…ILYFKYKNKK (85 aa). The Cytoplasmic portion of the chain corresponds to 154–165; sequence KKVIETRSVEYM. Residues 166-186 traverse the membrane as a helical segment; sequence PFYLSFFSFLASSLWLAYGLL. Residues 187 to 190 lie on the Extracellular side of the membrane; sequence SHDL. A helical membrane pass occupies residues 191–211; it reads FLASPNMVATPLGILQLILYF. The Cytoplasmic segment spans residues 212-263; that stretch reads KYKNKKDLAPTTMVITKRNDHDDKNKATLEFVVDVDRNSDTNEKNSNNASSI.

It belongs to the SWEET sugar transporter family. Forms heterooligomers with SWEET11, SWEET13 and SWEET17.

The protein resides in the cell membrane. Its function is as follows. Mediates both low-affinity uptake and efflux of sugar across the plasma membrane. The protein is Bidirectional sugar transporter SWEET3 of Arabidopsis thaliana (Mouse-ear cress).